Reading from the N-terminus, the 1767-residue chain is Trans-Golgi network-localized SYP41-interacting protein 1 (1767 aa).

The disordered stretch occupies residues 1–72 (MHEKDDLPQD…LTTDDDDNDD (72 aa)). Topologically, residues 1 to 1748 (MHEKDDLPQD…RVLMSRPQAR (1748 aa)) are cytoplasmic. Acidic residues predominate over residues 16-32 (IENDDESNGQEEEELDP). Coiled coils occupy residues 276-436 (LSHL…MSTA), 493-516 (VRSL…LKDL), 570-590 (KSNI…MEET), 684-805 (VSNL…LQQS), and 845-1082 (IQEV…LSSK). Positions 1177–1190 (DNSVNTEPENSQGS) are enriched in polar residues. The disordered stretch occupies residues 1177 to 1198 (DNSVNTEPENSQGSAADEDEIS). Coiled coils occupy residues 1251–1310 (NSSL…FQEN), 1362–1424 (IRDM…WHEK), 1522–1542 (LKKA…AKNE), and 1603–1630 (LAGS…KAIQ). Residues 1749–1766 (LGVMVYSLLLHLWLLASI) form a helical; Anchor for type IV membrane protein membrane-spanning segment. A topological domain (vesicular) is located at residue L1767.

Interacts with SYP41. In terms of tissue distribution, expressed ubiquitously in roots, leaves and flowers, and, to a lower extent, in stems.

Its subcellular location is the golgi apparatus. The protein localises to the trans-Golgi network membrane. Tethering factor involved in vesicle fusion at the trans-Golgi network (TGN) thus being required for efficient protein trafficking to the vacuole. Implicated in resistance to salt and osmotic stresses. Modulates the cell morphology (e.g. epidermal cell file rotation (CFR) and cell expansion) in mature regions of roots and the base of hypocotyls as well as root skewing, a process leading to root movement within the soil in order to maximize anchorage and nutrient acquisition, probably by regulating microtubule stabilization independently of their orientation. This chain is Trans-Golgi network-localized SYP41-interacting protein 1, found in Arabidopsis thaliana (Mouse-ear cress).